A 393-amino-acid chain; its full sequence is NAD(P)H-quinone oxidoreductase subunit H, chloroplastic (393 aa).

The protein belongs to the complex I 49 kDa subunit family. In terms of assembly, NDH is composed of at least 16 different subunits, 5 of which are encoded in the nucleus.

It is found in the plastid. The protein localises to the chloroplast thylakoid membrane. The catalysed reaction is a plastoquinone + NADH + (n+1) H(+)(in) = a plastoquinol + NAD(+) + n H(+)(out). It carries out the reaction a plastoquinone + NADPH + (n+1) H(+)(in) = a plastoquinol + NADP(+) + n H(+)(out). In terms of biological role, NDH shuttles electrons from NAD(P)H:plastoquinone, via FMN and iron-sulfur (Fe-S) centers, to quinones in the photosynthetic chain and possibly in a chloroplast respiratory chain. The immediate electron acceptor for the enzyme in this species is believed to be plastoquinone. Couples the redox reaction to proton translocation, and thus conserves the redox energy in a proton gradient. The protein is NAD(P)H-quinone oxidoreductase subunit H, chloroplastic of Hordeum vulgare (Barley).